We begin with the raw amino-acid sequence, 480 residues long: Protein disulfide-isomerase 5-4 (480 aa).

2 N-linked (GlcNAc...) asparagine glycosylation sites follow: Asn74 and Asn99. The 144-residue stretch at 120–263 folds into the Thioredoxin domain; it reads FHAGEVLSLI…LVKMVVSLVE (144 aa). Catalysis depends on nucleophile residues Cys170 and Cys173. Cysteines 170 and 173 form a disulfide. N-linked (GlcNAc...) asparagine glycans are attached at residues Asn280, Asn326, and Asn376. A helical transmembrane segment spans residues 439–459; the sequence is FSHFITNVCAIIGGVFTVAGI.

This sequence belongs to the protein disulfide isomerase family. As to expression, widely expressed.

Its subcellular location is the membrane. In terms of biological role, acts as a protein-folding catalyst that interacts with nascent polypeptides to catalyze the formation, isomerization, and reduction or oxidation of disulfide bonds. The sequence is that of Protein disulfide-isomerase 5-4 (PDIL5-4) from Arabidopsis thaliana (Mouse-ear cress).